Here is a 396-residue protein sequence, read N- to C-terminus: Stearoyl-[acyl-carrier-protein] 9-desaturase 2, chloroplastic (396 aa).

The transit peptide at 1 to 32 directs the protein to the chloroplast; the sequence is MALRPNDVTLRLTPPLAAAARRNRRAAAGGVR. The Fe cation site is built by E138, E176, H179, E229, E262, and H265.

Belongs to the fatty acid desaturase type 2 family. In terms of assembly, homodimer. Requires Fe(2+) as cofactor.

The protein localises to the plastid. It is found in the chloroplast. The catalysed reaction is octadecanoyl-[ACP] + 2 reduced [2Fe-2S]-[ferredoxin] + O2 + 2 H(+) = (9Z)-octadecenoyl-[ACP] + 2 oxidized [2Fe-2S]-[ferredoxin] + 2 H2O. Its pathway is lipid metabolism; fatty acid metabolism. Its function is as follows. Converts stearoyl-ACP to oleoyl-ACP by introduction of a cis double bond between carbons 9 and 10 of the acyl chain. Required for the repression of the salicylic acid (SA) signaling pathway. The chain is Stearoyl-[acyl-carrier-protein] 9-desaturase 2, chloroplastic (SSI2) from Oryza sativa subsp. indica (Rice).